We begin with the raw amino-acid sequence, 345 residues long: Histidinol-phosphate aminotransferase (345 aa).

Residue lysine 206 is modified to N6-(pyridoxal phosphate)lysine.

It belongs to the class-II pyridoxal-phosphate-dependent aminotransferase family. Histidinol-phosphate aminotransferase subfamily. Homodimer. The cofactor is pyridoxal 5'-phosphate.

It carries out the reaction L-histidinol phosphate + 2-oxoglutarate = 3-(imidazol-4-yl)-2-oxopropyl phosphate + L-glutamate. The protein operates within amino-acid biosynthesis; L-histidine biosynthesis; L-histidine from 5-phospho-alpha-D-ribose 1-diphosphate: step 7/9. In Bacteroides fragilis (strain YCH46), this protein is Histidinol-phosphate aminotransferase.